A 294-amino-acid polypeptide reads, in one-letter code: Putative lipid kinase SP_1045 (294 aa).

The DAGKc domain occupies methionine 1–tyrosine 131. Residues asparagine 9–glycine 13, threonine 40, glycine 66–glutamate 72, and threonine 93 each bind ATP. Positions 212 and 214 each coordinate Mg(2+). The Proton acceptor role is filled by aspartate 269.

Belongs to the diacylglycerol/lipid kinase family. Requires Mg(2+) as cofactor.

Functionally, may catalyze the ATP-dependent phosphorylation of lipids other than diacylglycerol (DAG). In fact, is not able to exhibit diacylglycerol kinase activity in vitro. The chain is Putative lipid kinase SP_1045 from Streptococcus pneumoniae serotype 4 (strain ATCC BAA-334 / TIGR4).